Reading from the N-terminus, the 477-residue chain is MGFWGLEVKPGKPQAYNPKNEQGKIHVTQATLGTGLSKEKSVIQCSIGDKAPIALCSLLPNKIECCPLNLEFDDDDEPVEFTVTGDRSIHLSGFLEYYQDDEDDYEHDEDDSDGIDVGESEEDDSCEYDSEEDEQLDEFEDFLDSNLERYRNAAAPKSGVIIEEIEDEEKPAKDNKAKQTKKKSQASEGENAKKQIVAIEGAHVPVLESEDEDEDGLPIPKGKSSEVENASGEKMVVDNDEQGSNKKRKAKAAEQDDGQESANKSKKKKNQKEKKKGENVLNEEAGQVQTGNVLKKQDISQISSNTKAQDGTANNAMSESSKTPDKSAEKKTKNKKKKKPSDEAAEISGTVEKQTPADSKSSQVRTYPNGLIVEELSMGKPNGKRADPGKTVSVRYIGKLQKNGKIFDSNIGKSPFKFRLGIGSVIKGWDVGVNGMRVGDKRKLTIPPSMGYGVKGAGGQIPPNSWLTFDVELINVQ.

Disordered stretches follow at residues 104 to 135 (DYEH…EDEQ) and 153 to 366 (AAAP…QVRT). Residues 264-274 (KSKKKKNQKEK) show a composition bias toward basic residues. Over residues 299 to 321 (ISQISSNTKAQDGTANNAMSESS) the composition is skewed to polar residues. Basic and acidic residues predominate over residues 322 to 331 (KTPDKSAEKK). Residues 351-366 (VEKQTPADSKSSQVRT) show a composition bias toward polar residues. The 89-residue stretch at 389–477 (GKTVSVRYIG…TFDVELINVQ (89 aa)) folds into the PPIase FKBP-type domain.

The protein belongs to the FKBP-type PPIase family. In terms of assembly, interacts with histone H3. As to expression, broadly expressed in leaves, flowers, stems and roots. Detected in root apical meristem region and pollen.

The protein resides in the nucleus. It catalyses the reaction [protein]-peptidylproline (omega=180) = [protein]-peptidylproline (omega=0). Its function is as follows. PPIases accelerate the folding of proteins. It catalyzes the cis-trans isomerization of proline imidic peptide bonds in oligopeptides. Histone chaperone possibly involved in H3/H4 deposition to the nucleosome. Associates with 18S rDNA chromatin and negatively regulates the level of its expression. The protein is Peptidyl-prolyl cis-trans isomerase FKBP53 (FKBP53) of Arabidopsis thaliana (Mouse-ear cress).